A 308-amino-acid chain; its full sequence is Pantothenate kinase (308 aa).

90-97 (GSVAVGKS) is an ATP binding site.

It belongs to the prokaryotic pantothenate kinase family.

It is found in the cytoplasm. The catalysed reaction is (R)-pantothenate + ATP = (R)-4'-phosphopantothenate + ADP + H(+). Its pathway is cofactor biosynthesis; coenzyme A biosynthesis; CoA from (R)-pantothenate: step 1/5. The chain is Pantothenate kinase from Sorangium cellulosum (strain So ce56) (Polyangium cellulosum (strain So ce56)).